The chain runs to 289 residues: Oxaloacetate decarboxylase (289 aa).

Serine 50 lines the substrate pocket. Aspartate 88 contacts Mg(2+). 2 residues coordinate substrate: arginine 159 and histidine 235.

This sequence belongs to the isocitrate lyase/PEP mutase superfamily. Oxaloacetate decarboxylase family. In terms of assembly, homotetramer; dimer of dimers. It depends on Mg(2+) as a cofactor.

It catalyses the reaction oxaloacetate + H(+) = pyruvate + CO2. Catalyzes the decarboxylation of oxaloacetate into pyruvate. Seems to play a role in maintaining cellular concentrations of bicarbonate and pyruvate. The sequence is that of Oxaloacetate decarboxylase from Pseudomonas putida (strain GB-1).